The chain runs to 156 residues: Endogenous retrovirus group K member 8 Pro protein (156 aa).

One can recognise a Peptidase A2 domain in the interval 21–96 (FEGLVDTGAD…IPLNLWGRDL (76 aa)). Aspartate 26 is an active-site residue. The region spanning 111–156 (YSPTSQKIMTKRGYIPGKGLGKNEDGIKIPFEAKINQKREGIGYPF) is the G-patch domain.

It belongs to the peptidase A2 family. HERV class-II K(HML-2) subfamily. As to quaternary structure, active as a homodimer. In terms of processing, autoproteolytically processed at the N-terminus. Expected C-terminal autoprocessing not detected. The sequence shown is that of the processed Pro protein.

The enzyme catalyses Processing at the authentic HIV-1 PR recognition site and release of the mature p17 matrix and the p24 capsid protein, as a result of the cleavage of the -SQNY-|-PIVQ- cleavage site.. In terms of biological role, retroviral proteases have roles in the processing of the primary translation products and the maturation of the viral particle. Endogenous Pro proteins may have kept, lost or modified their original function during evolution. The sequence is that of Endogenous retrovirus group K member 8 Pro protein (ERVK-8) from Homo sapiens (Human).